The chain runs to 707 residues: SEC14-like protein 5 (707 aa).

The region spanning 3–175 is the PRELI/MSF1 domain; that stretch reads QKYQSPVRVY…YLNELISQGI (173 aa). Residues 201–211 are compositionally biased toward polar residues; the sequence is RSNQAEQTASQ. The tract at residues 201–232 is disordered; it reads RSNQAEQTASQGPCKADAGSHSLAAEPSTPDT. The CRAL-TRIO domain maps to 315-491; sequence PPRVLEEYYA…FLGGECVCNI (177 aa). One can recognise a GOLD domain in the interval 518 to 667; it reads TETIYQSSCV…KCKLMYYFEV (150 aa). Over residues 686-695 the composition is skewed to polar residues; the sequence is FSQLSGVTNT. Positions 686–707 are disordered; it reads FSQLSGVTNTSSKSHSSSLISR. The segment covering 696 to 707 has biased composition (low complexity); sequence SSKSHSSSLISR.

The protein is SEC14-like protein 5 (sec14l1) of Xenopus tropicalis (Western clawed frog).